Here is an 85-residue protein sequence, read N- to C-terminus: Small ribosomal subunit protein uS17 (85 aa).

Belongs to the universal ribosomal protein uS17 family. Part of the 30S ribosomal subunit.

Its function is as follows. One of the primary rRNA binding proteins, it binds specifically to the 5'-end of 16S ribosomal RNA. This is Small ribosomal subunit protein uS17 from Acinetobacter baumannii (strain AB307-0294).